We begin with the raw amino-acid sequence, 423 residues long: Histidine--tRNA ligase (423 aa).

Belongs to the class-II aminoacyl-tRNA synthetase family. Homodimer.

It is found in the cytoplasm. It catalyses the reaction tRNA(His) + L-histidine + ATP = L-histidyl-tRNA(His) + AMP + diphosphate + H(+). This is Histidine--tRNA ligase from Staphylococcus haemolyticus (strain JCSC1435).